The primary structure comprises 915 residues: MVQLRKLLRVLTLMKFPCCVLEVLLCALAAAARGQEMYAPHSIRIEGDVTLGGLFPVHAKGPSGVPCGDIKRENGIHRLEAMLYALDQINSDPNLLPNVTLGARILDTCSRDTYALEQSLTFVQALIQKDTSDVRCTNGEPPVFVKPEKVVGVIGASGSSVSIMVANILRLFQIPQISYASTAPELSDDRRYDFFSRVVPPDSFQAQAMVDIVKALGWNYVSTLASEGSYGEKGVESFTQISKEAGGLCIAQSVRIPQERKDRTIDFDRIIKQLLDTPNSRAVVIFANDEDIKQILAAAKRADQVGHFLWVGSDSWGSKINPLHQHEDIAEGAITIQPKRATVEGFDAYFTSRTLENNRRNVWFAEYWEENFNCKLTISGSKKEDTDRKCTGQERIGKDSNYEQEGKVQFVIDAVYAMAHALHHMNKDLCADYRGVCPEMEQAGGKKLLKYIRNVNFNGSAGTPVMFNKNGDAPGRYDIFQYQTTNTSNPGYRLIGQWTDELQLNIEDMQWGKGVREIPASVCTLPCKPGQRKKTQKGTPCCWTCEPCDGYQYQFDEMTCQHCPYDQRPNENRTGCQDIPIIKLEWHSPWAVIPVFLAMLGIIATIFVMATFIRYNDTPIVRASGRELSYVLLTGIFLCYIITFLMIAKPDVAVCSFRRVFLGLGMCISYAALLTKTNRIYRIFEQGKKSVTAPRLISPTSQLAITSSLISVQLLGVFIWFGVDPPNIIIDYDEHKTMNPEQARGVLKCDITDLQIICSLGYSILLMVTCTVYAIKTRGVPENFNEAKPIGFTMYTTCIVWLAFIPIFFGTAQSAEKLYIQTTTLTISMNLSASVALGMLYMPKVYIIIFHPELNVQKRKRSFKAVVTAATMSSRLSHKPSDRPNGEAKTELCENVDPNSPAAKKKYVSYNNLVI.

Residues 1–34 form the signal peptide; that stretch reads MVQLRKLLRVLTLMKFPCCVLEVLLCALAAAARG. Over 35–590 the chain is Extracellular; sequence QEMYAPHSIR…IIKLEWHSPW (556 aa). C67 and C109 are oxidised to a cystine. N98 is a glycosylation site (N-linked (GlcNAc...) asparagine). Residues S159, 180-182, Y230, and D314 contribute to the L-glutamate site; that span reads AST. Cystine bridges form between C249–C541, C374–C390, C430–C437, C523–C542, C527–C545, C548–C560, and C563–C576. Position 407 (K407) interacts with L-glutamate. N458 and N486 each carry an N-linked (GlcNAc...) asparagine glycan. An N-linked (GlcNAc...) asparagine glycan is attached at N572. A helical transmembrane segment spans residues 591–615; sequence AVIPVFLAMLGIIATIFVMATFIRY. Topologically, residues 616–627 are cytoplasmic; the sequence is NDTPIVRASGRE. The helical transmembrane segment at 628–648 threads the bilayer; it reads LSYVLLTGIFLCYIITFLMIA. At 649-654 the chain is on the extracellular side; sequence KPDVAV. A helical transmembrane segment spans residues 655 to 675; that stretch reads CSFRRVFLGLGMCISYAALLT. Over 676-702 the chain is Cytoplasmic; sequence KTNRIYRIFEQGKKSVTAPRLISPTSQ. Residues 703–723 traverse the membrane as a helical segment; that stretch reads LAITSSLISVQLLGVFIWFGV. At 724 to 753 the chain is on the extracellular side; it reads DPPNIIIDYDEHKTMNPEQARGVLKCDITD. The helical transmembrane segment at 754–775 threads the bilayer; that stretch reads LQIICSLGYSILLMVTCTVYAI. At 776–788 the chain is on the cytoplasmic side; that stretch reads KTRGVPENFNEAK. The helical transmembrane segment at 789-810 threads the bilayer; the sequence is PIGFTMYTTCIVWLAFIPIFFG. Topologically, residues 811–825 are extracellular; sequence TAQSAEKLYIQTTTL. Residues 826-850 traverse the membrane as a helical segment; the sequence is TISMNLSASVALGMLYMPKVYIIIF. Residues 851–915 are Cytoplasmic-facing; that stretch reads HPELNVQKRK…KYVSYNNLVI (65 aa). A disordered region spans residues 874-895; sequence SRLSHKPSDRPNGEAKTELCEN. The segment covering 879-892 has biased composition (basic and acidic residues); sequence KPSDRPNGEAKTEL. Residue S900 is modified to Phosphoserine.

The protein belongs to the G-protein coupled receptor 3 family. In terms of assembly, homodimer. Interacts with PICK1. Post-translationally, N-glycosylated. As to expression, expressed in many areas of the brain, especially in the cerebral cortex, hippocampus, and cerebellum. Expression of GRM7 isoforms in non-neuronal tissues appears to be restricted to isoform 3 and isoform 4.

It localises to the cell membrane. G-protein coupled receptor activated by glutamate that regulates axon outgrowth through the MAPK-cAMP-PKA signaling pathway during neuronal development. Ligand binding causes a conformation change that triggers signaling via guanine nucleotide-binding proteins (G proteins) and modulates the activity of downstream effectors, such as adenylate cyclase that it inhibits. The sequence is that of Metabotropic glutamate receptor 7 (GRM7) from Homo sapiens (Human).